Reading from the N-terminus, the 1393-residue chain is DNA-directed RNA polymerase subunit beta' (1393 aa).

C71, C73, C86, and C89 together coordinate Zn(2+). Residues D462, D464, and D466 each coordinate Mg(2+). Zn(2+)-binding residues include C811, C885, C892, and C895.

It belongs to the RNA polymerase beta' chain family. As to quaternary structure, the RNAP catalytic core consists of 2 alpha, 1 beta, 1 beta' and 1 omega subunit. When a sigma factor is associated with the core the holoenzyme is formed, which can initiate transcription. Mg(2+) serves as cofactor. Requires Zn(2+) as cofactor.

It carries out the reaction RNA(n) + a ribonucleoside 5'-triphosphate = RNA(n+1) + diphosphate. In terms of biological role, DNA-dependent RNA polymerase catalyzes the transcription of DNA into RNA using the four ribonucleoside triphosphates as substrates. The chain is DNA-directed RNA polymerase subunit beta' from Azorhizobium caulinodans (strain ATCC 43989 / DSM 5975 / JCM 20966 / LMG 6465 / NBRC 14845 / NCIMB 13405 / ORS 571).